A 184-amino-acid chain; its full sequence is UPF0398 protein BALH_1408 (184 aa).

It belongs to the UPF0398 family.

This Bacillus thuringiensis (strain Al Hakam) protein is UPF0398 protein BALH_1408.